The primary structure comprises 353 residues: MSASETPSASASRGLSYRDAGVDIEAGDALVDRIKPFAKRTLREGVLGGIGGFGALFEISKKYQEPVLVSGTDGVGTKLKLAFALNRHDTVGQDLVAMSVNDILVQGAEPLFFLDYFACGKLDVDTAATVIKGIAQGCELAGCALIGGETAEMPSMYPAGEYDLAGFAVGAVEKRKIIDGTTIACGDVVLGLASSGAHSNGYSLVRKIIEVSRPDLNADFHGQRLQDAIMAPTRIYVKPLLALIDKLPVKGMAHITGGGLVENVPRVLPEGVTAVLHQDAWTLPPLFQWLQKAGNVADDEMHRVFNCGIGMIVIVSAADAPAAIAHLKDAGETVYQIGEIRARQPGEAQTIVI.

It belongs to the AIR synthase family.

It is found in the cytoplasm. It carries out the reaction 2-formamido-N(1)-(5-O-phospho-beta-D-ribosyl)acetamidine + ATP = 5-amino-1-(5-phospho-beta-D-ribosyl)imidazole + ADP + phosphate + H(+). The protein operates within purine metabolism; IMP biosynthesis via de novo pathway; 5-amino-1-(5-phospho-D-ribosyl)imidazole from N(2)-formyl-N(1)-(5-phospho-D-ribosyl)glycinamide: step 2/2. This is Phosphoribosylformylglycinamidine cyclo-ligase from Ralstonia nicotianae (strain ATCC BAA-1114 / GMI1000) (Ralstonia solanacearum).